The following is a 138-amino-acid chain: Acidic phospholipase A2 daboiatoxin A chain (138 aa).

A signal peptide spans 1–16 (MRTLWIMAVCLIGVEG). 7 cysteine pairs are disulfide-bonded: cysteine 42–cysteine 131, cysteine 44–cysteine 60, cysteine 59–cysteine 111, cysteine 65–cysteine 138, cysteine 66–cysteine 104, cysteine 73–cysteine 97, and cysteine 91–cysteine 102. The Ca(2+) site is built by tyrosine 43, glycine 45, and glycine 47. Histidine 63 is an active-site residue. Residue aspartate 64 coordinates Ca(2+). Residue aspartate 105 is part of the active site.

The protein belongs to the phospholipase A2 family. Group II subfamily. D49 sub-subfamily. In terms of assembly, heterodimer of A and B chain; non-covalently linked. The acidic protein (B chain) has phospholipase A2 activity and the A chain weakly inhibits the B chain enzymatic activity but potentiates its lethal potency. The cofactor is Ca(2+). In terms of tissue distribution, expressed by the venom gland.

It localises to the secreted. The catalysed reaction is a 1,2-diacyl-sn-glycero-3-phosphocholine + H2O = a 1-acyl-sn-glycero-3-phosphocholine + a fatty acid + H(+). Its function is as follows. Heterodimer (A and B chains): phospholipase A2 that acts as a presynaptic neurotoxin and shows a PLA2 activity of 1377 umol/min/mg. In vivo, induces edema and produces neurotoxic symptoms in mice. Also exhibits indirect hemolysis, a strong myonecrotic activity and cytotoxicity. PLA2 catalyzes the calcium-dependent hydrolysis of the 2-acyl groups in 3-sn-phosphoglycerides. Monomer: Snake venom phospholipase A2 (PLA2) that shows a PLA2 activity of 578 umol/min/mg. The polypeptide is Acidic phospholipase A2 daboiatoxin A chain (Daboia siamensis (Eastern Russel's viper)).